The primary structure comprises 138 residues: Putative pre-16S rRNA nuclease (138 aa).

The protein belongs to the YqgF nuclease family.

Its subcellular location is the cytoplasm. Its function is as follows. Could be a nuclease involved in processing of the 5'-end of pre-16S rRNA. The polypeptide is Putative pre-16S rRNA nuclease (Listeria monocytogenes serovar 1/2a (strain ATCC BAA-679 / EGD-e)).